The chain runs to 180 residues: ATP-dependent protease subunit HslV (180 aa).

The active site involves threonine 5. 3 residues coordinate Na(+): glycine 165, cysteine 168, and threonine 171.

Belongs to the peptidase T1B family. HslV subfamily. A double ring-shaped homohexamer of HslV is capped on each side by a ring-shaped HslU homohexamer. The assembly of the HslU/HslV complex is dependent on binding of ATP.

It localises to the cytoplasm. The enzyme catalyses ATP-dependent cleavage of peptide bonds with broad specificity.. Its activity is regulated as follows. Allosterically activated by HslU binding. In terms of biological role, protease subunit of a proteasome-like degradation complex believed to be a general protein degrading machinery. The protein is ATP-dependent protease subunit HslV of Helicobacter pylori (strain HPAG1).